The sequence spans 209 residues: Ribosomal RNA large subunit methyltransferase E (209 aa).

Residues Gly63, Trp65, Asp83, Asp99, and Asp124 each contribute to the S-adenosyl-L-methionine site. Lys164 acts as the Proton acceptor in catalysis.

The protein belongs to the class I-like SAM-binding methyltransferase superfamily. RNA methyltransferase RlmE family.

The protein resides in the cytoplasm. It catalyses the reaction uridine(2552) in 23S rRNA + S-adenosyl-L-methionine = 2'-O-methyluridine(2552) in 23S rRNA + S-adenosyl-L-homocysteine + H(+). In terms of biological role, specifically methylates the uridine in position 2552 of 23S rRNA at the 2'-O position of the ribose in the fully assembled 50S ribosomal subunit. This Shewanella sp. (strain MR-7) protein is Ribosomal RNA large subunit methyltransferase E.